Consider the following 459-residue polypeptide: Ribulose bisphosphate carboxylase large chain (459 aa).

Residue lysine 4 is modified to N6,N6,N6-trimethyllysine. Substrate is bound by residues asparagine 113 and threonine 163. Lysine 165 serves as the catalytic Proton acceptor. Residue lysine 167 coordinates substrate. Mg(2+)-binding residues include lysine 191, aspartate 193, and glutamate 194. At lysine 191 the chain carries N6-carboxylysine. Histidine 284 functions as the Proton acceptor in the catalytic mechanism. Residues arginine 285, histidine 317, and serine 369 each contribute to the substrate site.

The protein belongs to the RuBisCO large chain family. Type I subfamily. Heterohexadecamer of 8 large chains and 8 small chains; disulfide-linked. The disulfide link is formed within the large subunit homodimers. Mg(2+) is required as a cofactor. In terms of processing, the disulfide bond which can form in the large chain dimeric partners within the hexadecamer appears to be associated with oxidative stress and protein turnover.

The protein resides in the plastid. The protein localises to the chloroplast. It carries out the reaction 2 (2R)-3-phosphoglycerate + 2 H(+) = D-ribulose 1,5-bisphosphate + CO2 + H2O. The catalysed reaction is D-ribulose 1,5-bisphosphate + O2 = 2-phosphoglycolate + (2R)-3-phosphoglycerate + 2 H(+). Its function is as follows. RuBisCO catalyzes two reactions: the carboxylation of D-ribulose 1,5-bisphosphate, the primary event in carbon dioxide fixation, as well as the oxidative fragmentation of the pentose substrate in the photorespiration process. Both reactions occur simultaneously and in competition at the same active site. In Geum quellyon (Chilean avens), this protein is Ribulose bisphosphate carboxylase large chain.